A 480-amino-acid polypeptide reads, in one-letter code: Glycogen synthase (480 aa).

Lys-15 lines the ADP-alpha-D-glucose pocket.

It belongs to the glycosyltransferase 1 family. Bacterial/plant glycogen synthase subfamily.

The enzyme catalyses [(1-&gt;4)-alpha-D-glucosyl](n) + ADP-alpha-D-glucose = [(1-&gt;4)-alpha-D-glucosyl](n+1) + ADP + H(+). It participates in glycan biosynthesis; glycogen biosynthesis. Functionally, synthesizes alpha-1,4-glucan chains using ADP-glucose. This Rhizobium tropici protein is Glycogen synthase.